A 274-amino-acid polypeptide reads, in one-letter code: MSTYLIGDIHGCYHELQSLLDQVQFNPETDQLWLTGDLVARGPDSLEVLRFVRALGNCVRLVLGNHDLHLLAVYAGIGRNKTKDRLSDLLEADDVDELINWLRRQPLIQVDEEKKLVMAHAGITPQWDIATAQACAREVEAVLGSDTYPLFLNAMYGDMPNSWSPELGGLARLRFSTNALTRMRYCFPNGQLDMIAKEPPDSAPPPLKPWFDIPGPVSRDYTIVFGHWASLEGKGTPEGIVGLDTGCCWGGNLSMLRWEDKQMFIQPSRREKQL.

The protein belongs to the Ap4A hydrolase family.

The catalysed reaction is P(1),P(4)-bis(5'-adenosyl) tetraphosphate + H2O = 2 ADP + 2 H(+). In terms of biological role, hydrolyzes diadenosine 5',5'''-P1,P4-tetraphosphate to yield ADP. The protein is Bis(5'-nucleosyl)-tetraphosphatase, symmetrical of Erwinia tasmaniensis (strain DSM 17950 / CFBP 7177 / CIP 109463 / NCPPB 4357 / Et1/99).